The primary structure comprises 440 residues: Proline--tRNA ligase (440 aa).

Belongs to the class-II aminoacyl-tRNA synthetase family. ProS type 2 subfamily. Homodimer.

Its subcellular location is the cytoplasm. It catalyses the reaction tRNA(Pro) + L-proline + ATP = L-prolyl-tRNA(Pro) + AMP + diphosphate. Its function is as follows. Catalyzes the attachment of proline to tRNA(Pro) in a two-step reaction: proline is first activated by ATP to form Pro-AMP and then transferred to the acceptor end of tRNA(Pro). The chain is Proline--tRNA ligase from Methylocella silvestris (strain DSM 15510 / CIP 108128 / LMG 27833 / NCIMB 13906 / BL2).